Reading from the N-terminus, the 408-residue chain is MQIPSKLKPYYENIAFEQEDSKMIINLGPQHPSAHGNLRLILELDGEQVVKARPCIGYMHRGMEKMAENMIYQEFIPTTDRMDYIAASANNYAYCAAVEKLCGLEIPRRAAVIRMILLELNRITSHLLWLATHALDIGAMSVFLYCFREREYVLDLIEKYCGARLTHSSMRIGGVMLDLPENYLEEMLVFCDKFPNDLKDYEDLLDDNRIWRLRTENVGVVTKEQALNWGCTGVMLRGSGIKYDIRKEEPYLLYNEVEFGVPYATQGDSYARYKVYMQEFRESLKILRQCATLYKDTPPEILATHPEYVSASKEQILTQNYSLMQHFVLITQGLKPPKGEVYVPTESPKGELGFFIHSDGTGRPYRLKARTPSYWHCAFFEEMLVGTYLADVVAIMGNVNIVLGEIDR.

The protein belongs to the complex I 49 kDa subunit family. NDH-1 is composed of 14 different subunits. Subunits NuoB, C, D, E, F, and G constitute the peripheral sector of the complex.

It localises to the cell inner membrane. It catalyses the reaction a quinone + NADH + 5 H(+)(in) = a quinol + NAD(+) + 4 H(+)(out). Its function is as follows. NDH-1 shuttles electrons from NADH, via FMN and iron-sulfur (Fe-S) centers, to quinones in the respiratory chain. The immediate electron acceptor for the enzyme in this species is believed to be ubiquinone. Couples the redox reaction to proton translocation (for every two electrons transferred, four hydrogen ions are translocated across the cytoplasmic membrane), and thus conserves the redox energy in a proton gradient. The chain is NADH-quinone oxidoreductase subunit D from Campylobacter jejuni subsp. doylei (strain ATCC BAA-1458 / RM4099 / 269.97).